Here is a 265-residue protein sequence, read N- to C-terminus: MATEEPIVAVETVPEPIVTEPTTITEPEVPEKEEPKAEVEKTKKAKGSKPKKASKPRNPASHPTYEEMIKDAIVSLKEKNGSSQYAIAKFIEEKQKQLPANFKKLLLQNLKKNVASGKLIKVKGSFKLSAAAKKPAVAKPKAKTAAKAKSVKAKPAAKPKAKAVVKPKVASKAKAVAAKPKKAAAKPKTVAAKTKPTAAKPKAVVKPKSKVKPAKVAKTSVKTTPGKKVAAVKKVAAKKVPVKSVKAKSVKSPVKKVSVKRGGRK.

The span at 1 to 27 shows a compositional bias: low complexity; sequence MATEEPIVAVETVPEPIVTEPTTITEP. Disordered regions lie at residues 1 to 66, 131 to 226, and 242 to 265; these read MATE…PTYE, AAKK…TTPG, and VKSV…GGRK. A compositionally biased stretch (basic and acidic residues) spans 29-42; sequence VPEKEEPKAEVEKT. Basic residues predominate over residues 43–55; it reads KKAKGSKPKKASK. The H15 domain occupies 61-130; the sequence is SHPTYEEMIK…KVKGSFKLSA (70 aa). The segment covering 140–171 has biased composition (basic residues); sequence PKAKTAAKAKSVKAKPAAKPKAKAVVKPKVAS. Over residues 186 to 202 the composition is skewed to low complexity; that stretch reads KPKTVAAKTKPTAAKPK. Over residues 203-215 the composition is skewed to basic residues; sequence AVVKPKSKVKPAK. The span at 216-226 shows a compositional bias: low complexity; it reads VAKTSVKTTPG.

It belongs to the histone H1/H5 family.

Its subcellular location is the nucleus. The protein resides in the chromosome. Histones H1 are necessary for the condensation of nucleosome chains into higher-order structures. This Pisum sativum (Garden pea) protein is Histone H1.